The following is a 294-amino-acid chain: tRNA dimethylallyltransferase (294 aa).

11 to 18 is an ATP binding site; the sequence is GPTAVGKT. 13–18 contacts substrate; it reads TAVGKT. Positions 36 to 39 are interaction with substrate tRNA; sequence DSQQ.

This sequence belongs to the IPP transferase family. As to quaternary structure, monomer. Mg(2+) is required as a cofactor.

The enzyme catalyses adenosine(37) in tRNA + dimethylallyl diphosphate = N(6)-dimethylallyladenosine(37) in tRNA + diphosphate. Its function is as follows. Catalyzes the transfer of a dimethylallyl group onto the adenine at position 37 in tRNAs that read codons beginning with uridine, leading to the formation of N6-(dimethylallyl)adenosine (i(6)A). The polypeptide is tRNA dimethylallyltransferase (Lactococcus lactis subsp. cremoris (strain SK11)).